The sequence spans 444 residues: N-succinylarginine dihydrolase (444 aa).

Substrate-binding positions include 19 to 28 (AGLSFGNVAS), Asn110, and 137 to 138 (HR). Residue Glu174 is part of the active site. Arg214 is a substrate binding site. Residue His250 is part of the active site. The substrate site is built by Asp252 and Asn362. The Nucleophile role is filled by Cys368.

Belongs to the succinylarginine dihydrolase family. As to quaternary structure, homodimer.

It catalyses the reaction N(2)-succinyl-L-arginine + 2 H2O + 2 H(+) = N(2)-succinyl-L-ornithine + 2 NH4(+) + CO2. It participates in amino-acid degradation; L-arginine degradation via AST pathway; L-glutamate and succinate from L-arginine: step 2/5. Catalyzes the hydrolysis of N(2)-succinylarginine into N(2)-succinylornithine, ammonia and CO(2). This is N-succinylarginine dihydrolase from Shewanella oneidensis (strain ATCC 700550 / JCM 31522 / CIP 106686 / LMG 19005 / NCIMB 14063 / MR-1).